We begin with the raw amino-acid sequence, 584 residues long: uncharacterized protein (584 aa).

An N-terminal signal peptide occupies residues 1 to 27 (MGLSRKKIFTWPLLLTGMAVVSTTFSS). The N-palmitoyl cysteine moiety is linked to residue Cys28. Cys28 is lipidated: S-diacylglycerol cysteine. A disordered region spans residues 530–570 (NLPKKEGSTNQANQQTNQTNRSTDATKKDSSSDETNKNPLA). The span at 538–552 (TNQANQQTNQTNRST) shows a compositional bias: low complexity. Residues 553–565 (DATKKDSSSDETN) are compositionally biased toward basic and acidic residues.

It belongs to the MG067/MG068/MG395 family.

It localises to the cell membrane. This is an uncharacterized protein from Mycoplasmoides gallisepticum (strain R(low / passage 15 / clone 2)) (Mycoplasma gallisepticum).